Consider the following 163-residue polypeptide: Photosystem II extrinsic protein V (163 aa).

An N-terminal signal peptide occupies residues 1–26 (MFKTYSKSFACILFCIFNIFVVSASA). Heme c contacts are provided by Cys-63, Cys-66, His-67, and Met-130.

This sequence belongs to the cytochrome c family. PsbV subfamily. As to quaternary structure, PSII is composed of 1 copy each of membrane proteins PsbA, PsbB, PsbC, PsbD, PsbE, PsbF, PsbH, PsbI, PsbJ, PsbK, PsbL, PsbM, PsbT, PsbY, PsbZ, Psb30/Ycf12, at least 3 peripheral proteins of the oxygen-evolving complex and a large number of cofactors. It forms dimeric complexes. Heme c serves as cofactor.

Its subcellular location is the plastid. It is found in the chloroplast thylakoid membrane. Functionally, one of the extrinsic, lumenal subunits of photosystem II (PSII). PSII is a light-driven water plastoquinone oxidoreductase, using light energy to abstract electrons from H(2)O, generating a proton gradient subsequently used for ATP formation. The extrinsic proteins stabilize the structure of photosystem II oxygen-evolving complex (OEC), the ion environment of oxygen evolution and protect the OEC against heat-induced inactivation. The protein is Photosystem II extrinsic protein V of Thalassiosira pseudonana (Marine diatom).